We begin with the raw amino-acid sequence, 965 residues long: Pullulanase 1, chloroplastic (965 aa).

Residues 1–62 constitute a chloroplast transit peptide; the sequence is MALTLTPTSS…SKTSLHCLCS (62 aa). Asp-552 acts as the Nucleophile in catalysis. Catalysis depends on Glu-589, which acts as the Proton donor.

Belongs to the glycosyl hydrolase 13 family.

The protein localises to the plastid. Its subcellular location is the chloroplast stroma. The catalysed reaction is Hydrolysis of (1-&gt;6)-alpha-D-glucosidic linkages in alpha- and beta-limit dextrins of amylopectin and glycogen, and in amylopectin and pullulan.. Its pathway is glycan biosynthesis; starch biosynthesis. It participates in glycan degradation; starch degradation. Involved in starch degradation and also probably in the trimming of pre-amylopectin chains during starch synthesis. This Arabidopsis thaliana (Mouse-ear cress) protein is Pullulanase 1, chloroplastic (PU1).